We begin with the raw amino-acid sequence, 164 residues long: Lipoprotein signal peptidase (164 aa).

4 consecutive transmembrane segments (helical) span residues 2 to 22, 40 to 60, 70 to 90, and 99 to 119; these read MSLL…AIVL, VVIT…AFSF, WLFS…MAKA, and LAYS…VVYG. Residues Asp-123 and Asp-142 contribute to the active site. Residues 138–158 form a helical membrane-spanning segment; that stretch reads FNVADMAISCGAVFIILDGFI.

It belongs to the peptidase A8 family.

Its subcellular location is the cell inner membrane. It catalyses the reaction Release of signal peptides from bacterial membrane prolipoproteins. Hydrolyzes -Xaa-Yaa-Zaa-|-(S,diacylglyceryl)Cys-, in which Xaa is hydrophobic (preferably Leu), and Yaa (Ala or Ser) and Zaa (Gly or Ala) have small, neutral side chains.. It participates in protein modification; lipoprotein biosynthesis (signal peptide cleavage). Its function is as follows. This protein specifically catalyzes the removal of signal peptides from prolipoproteins. The chain is Lipoprotein signal peptidase from Tolumonas auensis (strain DSM 9187 / NBRC 110442 / TA 4).